A 399-amino-acid polypeptide reads, in one-letter code: Transferrin receptor subunit ESAG6 (399 aa).

Residues 1–17 (MRFWFVLLALLGKEIYA) form the signal peptide. Asn26 and Asn110 each carry an N-linked (GlcNAc...) asparagine glycan. Intrachain disulfides connect Cys34/Cys161, Cys84/Cys312, and Cys144/Cys215. N-linked (GlcNAc...) asparagine glycans are attached at residues Asn235, Asn250, and Asn360. The GPI-anchor amidated asparagine moiety is linked to residue Asn376. Residues 377 to 399 (AAAIHLSVSTAALCRSALLLGVL) constitute a propeptide, removed in mature form.

As to quaternary structure, heterodimer composed of ESAG6 and ESAG7. N-glycosylated. Glycosylation is dispensable for heterodimer formation and host transferrin binding.

It localises to the cell membrane. It is found in the flagellar pocket. In terms of biological role, transferrin receptor subunit involved in receptor-mediated acquisition of iron from the environment by binding host TF/transferrin. This is Transferrin receptor subunit ESAG6 from Trypanosoma brucei brucei.